A 589-amino-acid chain; its full sequence is ATP-dependent lipid A-core flippase (589 aa).

A run of 5 helical transmembrane segments spans residues 23–43 (WPIFLIGVVGMIAVSLSDAGF), 60–80 (LVFIRWLPFIIVLVFLFRGAA), 153–173 (VGLLVVMFLVSWKLTLFFLVI), 249–269 (VGTSLVQLLIAIPIAIVLFFA), and 272–292 (PSFHVTAGSFASIVSAMIMML). The ABC transmembrane type-1 domain occupies 27–307 (LIGVVGMIAV…LTMVNSYIQK (281 aa)). The ABC transporter domain maps to 339–575 (IEYQGVSFAY…NGAYAELYRM (237 aa)). ATP is bound at residue 373 to 380 (GRSGAGKS).

This sequence belongs to the ABC transporter superfamily. Lipid exporter (TC 3.A.1.106) family. As to quaternary structure, homodimer.

Its subcellular location is the cell inner membrane. The enzyme catalyses ATP + H2O + lipid A-core oligosaccharideSide 1 = ADP + phosphate + lipid A-core oligosaccharideSide 2.. Involved in lipopolysaccharide (LPS) biosynthesis. Translocates lipid A-core from the inner to the outer leaflet of the inner membrane. Transmembrane domains (TMD) form a pore in the inner membrane and the ATP-binding domain (NBD) is responsible for energy generation. This chain is ATP-dependent lipid A-core flippase, found in Coxiella burnetii (strain RSA 493 / Nine Mile phase I).